Reading from the N-terminus, the 73-residue chain is uncharacterized protein (73 aa).

It belongs to the asfivirus I73R family.

The protein resides in the virion. This is an uncharacterized protein from Ornithodoros (relapsing fever ticks).